A 690-amino-acid polypeptide reads, in one-letter code: Signal peptide peptidase-like 2C (690 aa).

The first 28 residues, 1 to 28, serve as a signal peptide directing secretion; sequence MACLGSLHPLGSLLLLFLLLLLSPEARG. Topologically, residues 29-192 are lumenal; that stretch reads EYGLVRVVSK…APLEPVTDYN (164 aa). One can recognise a PA domain in the interval 87–166; the sequence is DSSPRQRPLH…AVLRYTDMLD (80 aa). N-linked (GlcNAc...) asparagine glycosylation is present at asparagine 106. Residues 193–213 form a helical membrane-spanning segment; the sequence is MAIIFILAVGTVAAGGYWAGL. Over 214–260 the chain is Cytoplasmic; sequence MEANKLQRRQAQRGGGLGGHNQQQTVAAERSQRAWEDDDFEDAPMDF. The chain crosses the membrane as a helical span at residues 261 to 283; that stretch reads TPAMTGAVVTMSCSIMILLYFFY. Position 284 (aspartate 284) is a topological domain, lumenal. Residues 285 to 307 form a helical membrane-spanning segment; that stretch reads CFVYVMIGIFSLGASTGLYSCLA. The Cytoplasmic portion of the chain corresponds to 308 to 328; that stretch reads PILCHLPLWRYQWVLPGQRVS. A helical transmembrane segment spans residues 329–349; that stretch reads VTWPLLLLAGLCAMVTVLWVI. The Lumenal portion of the chain corresponds to 350–354; the sequence is HRNED. A helical transmembrane segment spans residues 355–373; sequence HWAWLLQDTLGVAYCLFVL. The Cytoplasmic segment spans residues 374 to 384; it reads RRVRLPTFKNC. Residues 385–405 traverse the membrane as a helical segment; the sequence is TLFLLALLAFDVFFVFITPLF. Aspartate 395 is an active-site residue. Residues 406 to 448 are Lumenal-facing; that stretch reads TKTGESIMVEVASGPADSSSHERLPMVLKVPRLSFSALTLCNQ. A helical transmembrane segment spans residues 449–469; the sequence is PFSILGFGDIVVPGFLVAYCH. Aspartate 457 is a catalytic residue. At 470–482 the chain is on the cytoplasmic side; sequence RFDMQVQSRQVYY. The helical transmembrane segment at 483–503 threads the bilayer; the sequence is MACTVAYAVGLLVTFVAMILM. A topological domain (lumenal) is located at residue glutamine 504. A helical transmembrane segment spans residues 505-525; the sequence is MGQPALLYLVSSTLLTSLAVA. The PAL signature appears at 508-510; that stretch reads PAL. Over 526 to 690 the chain is Cytoplasmic; that stretch reads TCRQEFTLFW…KKSMSAQAPL (165 aa). Residues 564-573 show a composition bias toward basic and acidic residues; it reads EDAKDSRTTN. Positions 564-633 are disordered; it reads EDAKDSRTTN…DPNELPSGSP (70 aa). Polar residues predominate over residues 615–624; that stretch reads SEGWSDTNLD.

The protein belongs to the peptidase A22B family. As to quaternary structure, interacts (via active sites) with FREY; the interaction stabilizes FREY1 protein and inhibits SPPL2C proteolytic activity. Glycosylated. Highly expressed in testis where it is primarily localised in spermatids (at protein level).

The protein localises to the endoplasmic reticulum membrane. Its function is as follows. Sperm-specific intramembrane-cleaving aspartic protease (I-CLiP) that cleaves distinct tail-anchored proteins and SNARE proteins. In elongated spermatids, modulates intracellular Ca(2+) homeostasis by controlling PLN abundance through proteolytic cleavage. During spermatogenesis, processes SNARE proteins and impacts vesicular trafficking which supports compartmental reorganization in maturating spermatids and may play a role in formation of the acrosome. In round spermatids, acts as a scaffold protein supporting FREY1 in IZUMO1 recruitment at the endoplasmic reticulum membrane and coordination of IZUMO1 complex assembly. Stabilizes FREY1 at the endoplasmic reticulum membrane through interaction. May recruit IZUMO1 interaction partners. Functionally, no difference in cleavage specificity compared to isoform 1. In Mus musculus (Mouse), this protein is Signal peptide peptidase-like 2C.